Reading from the N-terminus, the 474-residue chain is Na(+)/H(+) antiporter NhaA 3 (474 aa).

11 helical membrane passes run 31-51, 73-93, 110-130, 141-161, 171-191, 194-214, 220-240, 280-300, 309-329, 347-367, and 378-398; these read VGGV…NIPA, LSVA…VAGI, AALP…VYTV, GWAV…AVIG, FLLT…AVFF, TLNF…WLLL, GWYV…NSGV, LAVP…GALA, LGVV…GTWL, VFAV…IGEL, and EVKA…TVLL.

The protein belongs to the NhaA Na(+)/H(+) (TC 2.A.33) antiporter family.

The protein resides in the cell membrane. It carries out the reaction Na(+)(in) + 2 H(+)(out) = Na(+)(out) + 2 H(+)(in). Functionally, na(+)/H(+) antiporter that extrudes sodium in exchange for external protons. This is Na(+)/H(+) antiporter NhaA 3 from Streptomyces coelicolor (strain ATCC BAA-471 / A3(2) / M145).